The sequence spans 475 residues: Protein trichome birefringence-like 6 (475 aa).

The helical; Signal-anchor for type II membrane protein transmembrane segment at 14–34 (VLAFIITIISSAIVFFTFFSS) threads the bilayer. The short motif at 211-213 (GDS) is the GDS motif element. The DCXHWCLPGXXDXWN motif motif lies at 450-464 (DCSHWCLPGVPDTWN).

It belongs to the PC-esterase family. TBL subfamily.

The protein resides in the membrane. Its function is as follows. May act as a bridging protein that binds pectin and other cell wall polysaccharides. Probably involved in maintaining esterification of pectins. May be involved in the specific O-acetylation of cell wall polymers. This is Protein trichome birefringence-like 6 (TBL6) from Arabidopsis thaliana (Mouse-ear cress).